Here is a 350-residue protein sequence, read N- to C-terminus: Deoxyribonuclease-2-alpha (350 aa).

Residues 1-19 (MAAPSSLLLAALLWVPAEA) form the signal peptide. C22 and C162 are oxidised to a cystine. Residues N89, N215, N269, and N293 are each glycosylated (N-linked (GlcNAc...) asparagine). 2 disulfide bridges follow: C270–C350 and C311–C330. Residue H298 is part of the active site.

The protein belongs to the DNase II family. Ubiquitous.

The protein localises to the lysosome. It catalyses the reaction Endonucleolytic cleavage to nucleoside 3'-phosphates and 3'-phosphooligonucleotide end-products.. Functionally, hydrolyzes DNA under acidic conditions with a preference for double-stranded DNA. Plays a major role in the clearance of nucleic acids generated through apoptosis, hence preventing autoinflammation. Necessary for proper fetal development and for definitive erythropoiesis in fetal liver and bone marrow, where it degrades nuclear DNA expelled from erythroid precursor cells. This Rattus norvegicus (Rat) protein is Deoxyribonuclease-2-alpha (Dnase2).